Consider the following 203-residue polypeptide: Large ribosomal subunit protein bL25 (203 aa).

It belongs to the bacterial ribosomal protein bL25 family. CTC subfamily. In terms of assembly, part of the 50S ribosomal subunit; part of the 5S rRNA/L5/L18/L25 subcomplex. Contacts the 5S rRNA. Binds to the 5S rRNA independently of L5 and L18.

Functionally, this is one of the proteins that binds to the 5S RNA in the ribosome where it forms part of the central protuberance. The sequence is that of Large ribosomal subunit protein bL25 from Paraburkholderia phymatum (strain DSM 17167 / CIP 108236 / LMG 21445 / STM815) (Burkholderia phymatum).